A 334-amino-acid polypeptide reads, in one-letter code: ADP-L-glycero-D-manno-heptose-6-epimerase (334 aa).

Residues 11–12, 32–33, Lys-39, Lys-54, 77–81, and Asn-94 contribute to the NADP(+) site; these read FI, DN, and QGACS. Tyr-141 (proton acceptor) is an active-site residue. An NADP(+)-binding site is contributed by Lys-145. Asn-171 is a binding site for substrate. Residues Val-172 and Lys-180 each contribute to the NADP(+) site. The active-site Proton acceptor is Lys-180. Substrate-binding positions include Arg-182, His-189, 203–206, Arg-216, and Tyr-295; that span reads FGSN.

It belongs to the NAD(P)-dependent epimerase/dehydratase family. HldD subfamily. Homopentamer. The cofactor is NADP(+).

It catalyses the reaction ADP-D-glycero-beta-D-manno-heptose = ADP-L-glycero-beta-D-manno-heptose. It participates in nucleotide-sugar biosynthesis; ADP-L-glycero-beta-D-manno-heptose biosynthesis; ADP-L-glycero-beta-D-manno-heptose from D-glycero-beta-D-manno-heptose 7-phosphate: step 4/4. The protein operates within bacterial outer membrane biogenesis; LOS core biosynthesis. Functionally, catalyzes the interconversion between ADP-D-glycero-beta-D-manno-heptose and ADP-L-glycero-beta-D-manno-heptose via an epimerization at carbon 6 of the heptose. This is ADP-L-glycero-D-manno-heptose-6-epimerase from Neisseria gonorrhoeae.